The primary structure comprises 401 residues: Glucose-6-phosphate isomerase (401 aa).

Glu261 functions as the Proton donor in the catalytic mechanism. Active-site residues include His282 and Lys392.

This sequence belongs to the GPI family. As to quaternary structure, homodimer.

The protein localises to the cytoplasm. It catalyses the reaction alpha-D-glucose 6-phosphate = beta-D-fructose 6-phosphate. It participates in carbohydrate biosynthesis; gluconeogenesis. It functions in the pathway carbohydrate degradation; glycolysis; D-glyceraldehyde 3-phosphate and glycerone phosphate from D-glucose: step 2/4. Its activity is regulated as follows. Competively inhibited by 6-phosphogluconate and erythrose 4-phosphate. In terms of biological role, catalyzes the isomerization of glucose-6-P to fructose-6-P. The polypeptide is Glucose-6-phosphate isomerase (Methanocaldococcus jannaschii (strain ATCC 43067 / DSM 2661 / JAL-1 / JCM 10045 / NBRC 100440) (Methanococcus jannaschii)).